We begin with the raw amino-acid sequence, 217 residues long: PTB-containing, cubilin and LRP1-interacting protein (217 aa).

The region spanning valine 60–glycine 217 is the PID domain. Residues lysine 194–glycine 217 form a disordered region. Phosphoserine is present on residues serine 202, serine 203, and serine 214. Over residues alanine 208–glycine 217 the composition is skewed to acidic residues.

Found in a complex with PID1/PCLI1, LRP1 and CUBNI. Interacts with LRP1 and CUBN.

It is found in the cytoplasm. In terms of biological role, increases proliferation of preadipocytes without affecting adipocytic differentiation. The sequence is that of PTB-containing, cubilin and LRP1-interacting protein (Pid1) from Mus musculus (Mouse).